Reading from the N-terminus, the 76-residue chain is Kappa-actitoxin-Avd4e (76 aa).

Residues 1-19 form the signal peptide; it reads MNKALFLCLVVLCAAVVFA. A propeptide spanning residues 20–31 is cleaved from the precursor; sequence AEDLQKAKHAPF. 3 disulfide bridges follow: Cys-37–Cys-72, Cys-39–Cys-65, and Cys-55–Cys-73. Residues 45–47 carry the Cell attachment site motif; the sequence is RGD.

It belongs to the sea anemone type 3 (BDS) potassium channel toxin family. In terms of tissue distribution, moderately expressed in the ectodermal tissue from the distal and proximal tentacles, body wall, and oral disk.

The protein localises to the secreted. It localises to the nematocyst. Its function is as follows. Is member of a fraction that shows antiangiogenic activity, since it inhibits human microvascular endothelial cells (HMEC) tubulogenesis. This protein could be a kunitz-type inhibitor with a RGD motif that could block angiogenesis in binding on integrins. Blocks Kv3 voltage-gated potassium channels. Reduces blood pressure. This is Kappa-actitoxin-Avd4e from Anemonia viridis (Snakelocks anemone).